Reading from the N-terminus, the 254-residue chain is Alcohol dehydrogenase (254 aa).

Residue 10–33 participates in NAD(+) binding; the sequence is FVAGLGGIGLDTSREIVKSGPKNL. Ser138 contacts substrate. The active-site Proton acceptor is the Tyr151.

This sequence belongs to the short-chain dehydrogenases/reductases (SDR) family. As to quaternary structure, homodimer.

The catalysed reaction is a primary alcohol + NAD(+) = an aldehyde + NADH + H(+). It catalyses the reaction a secondary alcohol + NAD(+) = a ketone + NADH + H(+). The protein is Alcohol dehydrogenase (Adh) of Drosophila nigra (Fruit fly).